Consider the following 563-residue polypeptide: Efflux pump notK (563 aa).

A disordered region spans residues 1-32 (MTKDEDSGTTDGGYSTPDIAVQEKQDQPPAPE). The next 14 helical transmembrane spans lie at 48 to 68 (IFLS…AIPG), 78 to 98 (DVGW…PMWG), 108 to 128 (LVYL…AAAP), 138 to 158 (ALQG…ISYV), 165 to 185 (AMLI…GPLL), 197 to 217 (WCFW…VLFF), 239 to 259 (LPGF…LQWG), 270 to 290 (VIAT…VEWI), 312 to 332 (LYGW…PIYF), 345 to 365 (VNSL…GFLI), 374 to 394 (YEFA…TLDI), 406 to 426 (VIFG…LESF), 438 to 458 (VMLM…QSIF), and 509 to 529 (VFAF…AIPF). The interval 538 to 563 (GPSNGQEEEEGKKDGPAEKKEDEVAV) is disordered. Basic and acidic residues predominate over residues 547–563 (EGKKDGPAEKKEDEVAV).

Belongs to the major facilitator superfamily. TCR/Tet family.

The protein localises to the cell membrane. Its function is as follows. Efflux pump; part of the gene cluster that mediates the biosynthesis of notoamide, a fungal indole alkaloid that belongs to a family of natural products containing a characteristic bicyclo[2.2.2]diazaoctane core. The protein is Efflux pump notK of Aspergillus sp. (strain MF297-2).